A 757-amino-acid polypeptide reads, in one-letter code: LPS-assembly protein LptD (757 aa).

The first 21 residues, 1–21 (MRRLIPIAITGSLLWGAAVQA), serve as a signal peptide directing secretion.

It belongs to the LptD family. As to quaternary structure, component of the lipopolysaccharide transport and assembly complex. Interacts with LptE and LptA.

The protein resides in the cell outer membrane. In terms of biological role, together with LptE, is involved in the assembly of lipopolysaccharide (LPS) at the surface of the outer membrane. The sequence is that of LPS-assembly protein LptD from Alkalilimnicola ehrlichii (strain ATCC BAA-1101 / DSM 17681 / MLHE-1).